Here is a 125-residue protein sequence, read N- to C-terminus: Aspercryptin biosynthesis cluster protein K (125 aa).

The segment at 104-125 (QRAESVAGDSRPREHRQGAVGY) is disordered. The span at 113–125 (SRPREHRQGAVGY) shows a compositional bias: basic and acidic residues.

The protein operates within secondary metabolite biosynthesis. Its function is as follows. Part of the gene cluster that mediates the biosynthesis of aspercryptins, linear lipopeptides built from six amino acids including 2 highly unusual and nonproteogenic amino acids, 2-amino-octanoic acid (2aoa) and 2-amino-dodecanol (2adol). The core structure of aspercryptins is as follows: Ser/Ala-Thr-Ile/Val-2aoa-Asn-2adol. The first step of aspercryptin biosynthesis is the generation of the fatty acid precursors, octanoic and dodecanoic acids, by the FAS subunits atnF and atnM. The fatty acid precursors are likely transformed into the corresponding alpha-amino fatty acids in three steps. First, they are hydroxylated by the cytochrome P450 monooxygenase atnE, then oxidized to the corresponding alpha-keto acids by the NAD(P)-dependent oxidoreductase atnD, and finally converted to the alpha-amino fatty acids by the PLP-dependent aminotransferases atnH or atnJ. the alpha-amino fatty acids, 2-amino-octanoic and 2-amino-dodecanoic acids, are recognized, activated, and covalently tethered to the NRPS atnA by its fourth and sixth adenylation domains. The second module of atnA is the Thr module and contains an epimerase (E) domain responsible for the epimerization of Thr to D-allo-Thr. Additionally, despite atnA having only one epimerase domain, the first amino acid of aspercryptin A1 is D-Ser, suggesting that serine is either loaded directly as D-Ser on the first module or that the epimerase domain in the threonine module epimerizes both L-Ser and L-Thr. After condensation of the hexapeptide of aspercryptin, the C-terminal reductase (TE) domain might be involved in the reductive release and production of the aldehyde hexapeptide. Further reduction would generate aspercryptins. The variety of aspercryptins produced reflects the flexibility of the atnA NRPS, allowing incorporation of alanine instead of serine, valine for isoleucine, and a C10 fatty amino alcohol instead of the C12 version. AtnB seems to be involved in the selectivity for Ile versus Val by the third module. Moreover, type B, C and D aspercryptins have an additional N-terminal cichorine, acetyl and propionyl group respectively. The sequence is that of Aspercryptin biosynthesis cluster protein K from Emericella nidulans (strain FGSC A4 / ATCC 38163 / CBS 112.46 / NRRL 194 / M139) (Aspergillus nidulans).